Here is a 144-residue protein sequence, read N- to C-terminus: Methylglyoxal synthase (144 aa).

The MGS-like domain maps to 1–144; it reads MKIALIAHDE…KSGEEKETER (144 aa). Substrate-binding positions include H8, K12, 34–37, and 54–55; these read TGTT and SG. D60 functions as the Proton donor/acceptor in the catalytic mechanism. H87 lines the substrate pocket.

It belongs to the methylglyoxal synthase family.

The enzyme catalyses dihydroxyacetone phosphate = methylglyoxal + phosphate. Functionally, catalyzes the formation of methylglyoxal from dihydroxyacetone phosphate. The polypeptide is Methylglyoxal synthase (Geobacillus thermodenitrificans (strain NG80-2)).